Consider the following 427-residue polypeptide: Serine--tRNA ligase (427 aa).

T228–E230 is an L-serine binding site. R259–E261 lines the ATP pocket. E282 lines the L-serine pocket. ATP is bound at residue E346–S349. Residue S384 coordinates L-serine.

This sequence belongs to the class-II aminoacyl-tRNA synthetase family. Type-1 seryl-tRNA synthetase subfamily. As to quaternary structure, homodimer. The tRNA molecule binds across the dimer.

The protein resides in the cytoplasm. It carries out the reaction tRNA(Ser) + L-serine + ATP = L-seryl-tRNA(Ser) + AMP + diphosphate + H(+). The catalysed reaction is tRNA(Sec) + L-serine + ATP = L-seryl-tRNA(Sec) + AMP + diphosphate + H(+). The protein operates within aminoacyl-tRNA biosynthesis; selenocysteinyl-tRNA(Sec) biosynthesis; L-seryl-tRNA(Sec) from L-serine and tRNA(Sec): step 1/1. In terms of biological role, catalyzes the attachment of serine to tRNA(Ser). Is also able to aminoacylate tRNA(Sec) with serine, to form the misacylated tRNA L-seryl-tRNA(Sec), which will be further converted into selenocysteinyl-tRNA(Sec). This Ehrlichia ruminantium (strain Welgevonden) protein is Serine--tRNA ligase.